The chain runs to 332 residues: Hdr-like menaquinol oxidoreductase cytochrome b-like subunit (332 aa).

The next 5 membrane-spanning stretches (helical) occupy residues 3–23 (GVIF…IGVI), 97–117 (DARW…LVLI), 143–163 (VFIP…FLLW), 177–197 (LPSD…GNVM), and 230–250 (IEPI…YFPF).

As to quaternary structure, consists of five subunits: an integral membrane subunit, a cytochrome b-like subunit, a cytochrome c subunit and two iron-sulfur subunits.

The protein localises to the cell membrane. Its function is as follows. Has menaquinol-oxidizing activity. HmeC and HmeD subunits may together mediate electron transfer from menaquinol to an unidentified electron acceptor on the cytoplasmic side of the membrane. In Archaeoglobus fulgidus (strain ATCC 49558 / DSM 4304 / JCM 9628 / NBRC 100126 / VC-16), this protein is Hdr-like menaquinol oxidoreductase cytochrome b-like subunit (hmeC).